Reading from the N-terminus, the 256-residue chain is Rano class II histocompatibility antigen, B alpha chain (256 aa).

The N-terminal stretch at 1–23 (MPLSRALILGVLALTTMLSPCGG) is a signal peptide. An alpha-1 region spans residues 24–111 (QDDIEADHVG…KRSNSTPAVN (88 aa)). At 24–218 (QDDIEADHVG…IPAPMSELTE (195 aa)) the chain is on the extracellular side. In terms of domain architecture, Ig-like C1-type spans 108–206 (PAVNEVPEAT…LDEPVLRHWE (99 aa)). An alpha-2 region spans residues 112–205 (EVPEATVFSK…SLDEPVLRHW (94 aa)). Cys134 and Cys190 are joined by a disulfide. An N-linked (GlcNAc...) asparagine glycan is attached at Asn145. The connecting peptide stretch occupies residues 206–218 (EPEIPAPMSELTE). The chain crosses the membrane as a helical span at residues 219–244 (TVVCALGLSVGLVGIVVGTIFIIQGL). At 245–256 (RSVAPSRHPGPL) the chain is on the cytoplasmic side.

Belongs to the MHC class II family.

It is found in the membrane. This is Rano class II histocompatibility antigen, B alpha chain (RT1-Ba) from Rattus norvegicus (Rat).